An 89-amino-acid chain; its full sequence is Large ribosomal subunit protein bL27 (89 aa).

Residues 1 to 21 are disordered; it reads MAHKKAGGSSRNGRDSESKRL.

The protein belongs to the bacterial ribosomal protein bL27 family.

This chain is Large ribosomal subunit protein bL27, found in Bartonella quintana (strain Toulouse) (Rochalimaea quintana).